The primary structure comprises 285 residues: MDVCAASFPLLVLNSVHSTTGARAQFTPAAVEARVKVPVTATVRFCVSRRNRCVHGNIDCHKFACNPTSEDELEPDNYTVNAEFFKTKVAAKKELRKTRHSAASDSDTDDDEAEFVKQKLRRHFDGEDSCDVELYSCRMSVFAIDDMFEHDVYNALNRGVDYRTACKWDTRQTDVFEFRENFCSLDTITDIVFNWLSVTSNDNFTILFKNSSNALWKTLANNNLITVTVNKNETPVMLTSNEFPEATLFEVLDKMRQIVLAQLYHRVDCDANEAVATFAFDLFLK.

The polypeptide is OPEP-3 protein (OPEP-3) (Orgyia pseudotsugata multicapsid polyhedrosis virus (OpMNPV)).